Consider the following 532-residue polypeptide: Intercellular adhesion molecule 1 (532 aa).

An N-terminal signal peptide occupies residues 1 to 27; sequence MAPSGPQPALPILVVLLGALLLGPGNA. Residues 28–480 lie on the Extracellular side of the membrane; it reads QTSVFPPEVI…TVNVLSPRYE (453 aa). 2 consecutive Ig-like C2-type domains span residues 41-103 and 128-193; these read GGSV…QSSA and GKNL…LDLR. An N-linked (GlcNAc...) asparagine glycan is attached at Asn47. 2 cysteine pairs are disulfide-bonded: Cys48–Cys92 and Cys52–Cys96. N-linked (GlcNAc...) asparagine glycans are attached at residues Asn130 and Asn145. A disulfide bridge links Cys135 with Cys186. The Cell attachment site; atypical motif lies at 152 to 154; that stretch reads RGE. N-linked (GlcNAc...) asparagine glycosylation is found at Asn183, Asn202, Asn267, Asn296, and Asn316. Residues 230–297 enclose the Ig-like C2-type 3 domain; that stretch reads DTQGTVVCSL…LLCGVMLGNQ (68 aa). Cys237 and Cys290 are joined by a disulfide. One can recognise an Ig-like C2-type 4 domain in the interval 325–378; sequence GTEVIVECEAHPRAKVMLNGVPAQPPGPRAQFLLKATPEDNGRSFSCSATLEVA. A disulfide bridge links Cys332 with Cys371. Residues Asn385 and Asn406 are each glycosylated (N-linked (GlcNAc...) asparagine). Disulfide bonds link Cys403/Cys419, Cys419/Cys457, and Cys431/Cys457. In terms of domain architecture, Ig-like C2-type 5 spans 412 to 464; it reads NSQQTPMCQAWGNPLPQLKCLKDGTFPLPIGQSVTVTRDLEGTYLCQARSTRG. Residues 481 to 503 traverse the membrane as a helical segment; that stretch reads VVIIPVVAAAVILGTAGVATYLY. The Cytoplasmic segment spans residues 504-532; sequence NRQRKIRKYRLQQAQNGTPMKPNTQATPP. The disordered stretch occupies residues 513–532; the sequence is RLQQAQNGTPMKPNTQATPP. Residues 515–532 are compositionally biased toward polar residues; the sequence is QQAQNGTPMKPNTQATPP. Phosphothreonine occurs at positions 521 and 530.

It belongs to the immunoglobulin superfamily. ICAM family. In terms of assembly, homodimer. Interacts with MUC1 and promotes cell aggregation in epithelial cells. Interacts with ARHGEF26/SGEF. Interacts (on T cell side) with CD81, CD247 and CD9 at immunological synapses between antigen-presenting cells and T cells. Post-translationally, monoubiquitinated, which is promoted by MARCH9 and leads to endocytosis.

The protein localises to the membrane. In terms of biological role, ICAM proteins are ligands for the leukocyte adhesion protein LFA-1 (integrin alpha-L/beta-2). During leukocyte trans-endothelial migration, ICAM1 engagement promotes the assembly of endothelial apical cups through ARHGEF26/SGEF and RHOG activation. In Macaca mulatta (Rhesus macaque), this protein is Intercellular adhesion molecule 1 (ICAM1).